The primary structure comprises 582 residues: PX domain-containing protein kinase-like protein (582 aa).

The PX domain occupies 14-126; it reads LDDTVPLTAA…KFLDPNNYSA (113 aa). Residues 88-481 enclose the Protein kinase domain; that stretch reads FIAERQRGLQ…VENSEEQPVK (394 aa). Residues 433 to 550 form a disordered region; the sequence is EQKQIHQHRR…APFLPQPVNG (118 aa). Composition is skewed to basic residues over residues 437-448 and 457-469; these read IHQHRRLTRAQS and KRRKILARKKSKR. Residues 483–514 are compositionally biased toward low complexity; sequence SNSNNSAGSGASSPLTSPSSPTPPSTAGLSSA. The segment covering 515-531 has biased composition (pro residues); it reads LPPPPPPPPPPPPPAGP. In terms of domain architecture, WH2 spans 548 to 567; that stretch reads VNGVNRGALLSSIQNFQKGT.

The protein belongs to the protein kinase superfamily. Isoform 1 is present in all tissues examined. Isoform 2 is found in all tissues except skeletal muscle and very low levels in spleen. Both isoforms are widely expressed throughout the nervous system however levels of isoform 2 are higher in purified hippocampal and cortical neurons whereas glial cells express more isoform 1 than isoform 2.

It is found in the cytoplasm. The protein localises to the cell membrane. Its function is as follows. Binds to and modulates brain Na,K-ATPase subunits ATP1B1 and ATP1B3 and may thereby participate in the regulation of electrical excitability and synaptic transmission. May not display kinase activity. The chain is PX domain-containing protein kinase-like protein from Mus musculus (Mouse).